The chain runs to 185 residues: MIDEALFDAEEKMEKAVSVAREDMATIRTGRANPGMFSRIVIDYYGTHTPITQLASINVPEARMVVIKPYEANQLHAIETAIRNSDLGVNPTNDGTIIRVAVPQLTEERRRDLVKQAKHKGEEARVSVRNIRRKAMEELHRIRKDGEAGEDEVARAEKDLDKSTHQYVAQIDELVKHKEGDLLEV.

The tract at residues 143–163 (RKDGEAGEDEVARAEKDLDKS) is disordered.

The protein belongs to the RRF family.

It is found in the cytoplasm. In terms of biological role, responsible for the release of ribosomes from messenger RNA at the termination of protein biosynthesis. May increase the efficiency of translation by recycling ribosomes from one round of translation to another. This is Ribosome-recycling factor from Mycobacterium ulcerans (strain Agy99).